The sequence spans 95 residues: Aspartyl/glutamyl-tRNA(Asn/Gln) amidotransferase subunit C (95 aa).

This sequence belongs to the GatC family. As to quaternary structure, heterotrimer of A, B and C subunits.

The enzyme catalyses L-glutamyl-tRNA(Gln) + L-glutamine + ATP + H2O = L-glutaminyl-tRNA(Gln) + L-glutamate + ADP + phosphate + H(+). It catalyses the reaction L-aspartyl-tRNA(Asn) + L-glutamine + ATP + H2O = L-asparaginyl-tRNA(Asn) + L-glutamate + ADP + phosphate + 2 H(+). Functionally, allows the formation of correctly charged Asn-tRNA(Asn) or Gln-tRNA(Gln) through the transamidation of misacylated Asp-tRNA(Asn) or Glu-tRNA(Gln) in organisms which lack either or both of asparaginyl-tRNA or glutaminyl-tRNA synthetases. The reaction takes place in the presence of glutamine and ATP through an activated phospho-Asp-tRNA(Asn) or phospho-Glu-tRNA(Gln). In Rhodopseudomonas palustris (strain BisB5), this protein is Aspartyl/glutamyl-tRNA(Asn/Gln) amidotransferase subunit C.